The sequence spans 158 residues: UPF0262 protein RHOS4_22360 (158 aa).

The protein belongs to the UPF0262 family.

The chain is UPF0262 protein RHOS4_22360 from Cereibacter sphaeroides (strain ATCC 17023 / DSM 158 / JCM 6121 / CCUG 31486 / LMG 2827 / NBRC 12203 / NCIMB 8253 / ATH 2.4.1.) (Rhodobacter sphaeroides).